The primary structure comprises 576 residues: Alpha-bisabolol synthase (576 aa).

Residues R286, D323, D327, R466, and N469 each coordinate (2E,6E)-farnesyl diphosphate. 2 residues coordinate Mg(2+): D323 and D327. The DDXXD motif signature appears at 323–327 (DDVYD). Mg(2+) contacts are provided by N469, T473, and E477.

The protein belongs to the terpene synthase family. Tpsb subfamily. The cofactor is Mg(2+). Requires Mn(2+) as cofactor.

Its function is as follows. Produces a mixture of beta-bisabolene and alpha-bisabolol, along with traces of alpha-bisabolene and farnesene isomers from (2E,6E)-farnesyl diphosphate in fragrance biosynthesis. The polypeptide is Alpha-bisabolol synthase (Santalum spicatum (Australian sandalwood)).